Consider the following 204-residue polypeptide: Small ribosomal subunit protein uS4 (204 aa).

The S4 RNA-binding domain occupies 93–156 (SRLSSVLYHS…AKIPILIEAE (64 aa)).

Belongs to the universal ribosomal protein uS4 family. Part of the 30S ribosomal subunit. Contacts protein S5. The interaction surface between S4 and S5 is involved in control of translational fidelity.

Functionally, one of the primary rRNA binding proteins, it binds directly to 16S rRNA where it nucleates assembly of the body of the 30S subunit. In terms of biological role, with S5 and S12 plays an important role in translational accuracy. The protein is Small ribosomal subunit protein uS4 of Wolbachia pipientis subsp. Culex pipiens (strain wPip).